Here is a 532-residue protein sequence, read N- to C-terminus: SET and MYND domain-containing protein DDB_G0288495 (532 aa).

The region spanning 25–448 (PWIEVKSVSE…ENQELLITYI (424 aa)) is the SET domain. Residues 70–116 (CTTCFKILLESNRHNFQTCPSCFQVNYCSNYCKQYSKIETKHTELEC) form an MYND-type; degenerate zinc finger. The stretch at 199 to 240 (INSKNNNEFENEEEEEEEQEQKGEGEQEENENNENNEKVKKK) forms a coiled coil. Residues 204–234 (NNEFENEEEEEEEQEQKGEGEQEENENNENN) form a disordered region. A compositionally biased stretch (acidic residues) spans 207 to 217 (FENEEEEEEEQ).

It belongs to the class V-like SAM-binding methyltransferase superfamily.

Functionally, probable methyltransferase. This Dictyostelium discoideum (Social amoeba) protein is SET and MYND domain-containing protein DDB_G0288495.